The sequence spans 189 residues: Flavin prenyltransferase UbiX (189 aa).

FMN-binding positions include 10–12, serine 37, 88–91, and arginine 123; these read GAS and SIKT. 2 residues coordinate dimethylallyl phosphate: tyrosine 153 and arginine 169.

It belongs to the UbiX/PAD1 family.

It carries out the reaction dimethylallyl phosphate + FMNH2 = prenylated FMNH2 + phosphate. It participates in cofactor biosynthesis; ubiquinone biosynthesis. Its function is as follows. Flavin prenyltransferase that catalyzes the synthesis of the prenylated FMN cofactor (prenyl-FMN) for 4-hydroxy-3-polyprenylbenzoic acid decarboxylase UbiD. The prenyltransferase is metal-independent and links a dimethylallyl moiety from dimethylallyl monophosphate (DMAP) to the flavin N5 and C6 atoms of FMN. This is Flavin prenyltransferase UbiX from Escherichia coli O157:H7.